We begin with the raw amino-acid sequence, 185 residues long: ATP synthase subunit b (185 aa).

Residues Gly27–Gly47 form a helical membrane-spanning segment.

The protein belongs to the ATPase B chain family. F-type ATPases have 2 components, F(1) - the catalytic core - and F(0) - the membrane proton channel. F(1) has five subunits: alpha(3), beta(3), gamma(1), delta(1), epsilon(1). F(0) has three main subunits: a(1), b(2) and c(10-14). The alpha and beta chains form an alternating ring which encloses part of the gamma chain. F(1) is attached to F(0) by a central stalk formed by the gamma and epsilon chains, while a peripheral stalk is formed by the delta and b chains.

It localises to the cell inner membrane. Functionally, f(1)F(0) ATP synthase produces ATP from ADP in the presence of a proton or sodium gradient. F-type ATPases consist of two structural domains, F(1) containing the extramembraneous catalytic core and F(0) containing the membrane proton channel, linked together by a central stalk and a peripheral stalk. During catalysis, ATP synthesis in the catalytic domain of F(1) is coupled via a rotary mechanism of the central stalk subunits to proton translocation. Component of the F(0) channel, it forms part of the peripheral stalk, linking F(1) to F(0). This Aquifex aeolicus (strain VF5) protein is ATP synthase subunit b.